An 89-amino-acid polypeptide reads, in one-letter code: Small ribosomal subunit protein uS15 (89 aa).

The span at 1 to 13 shows a compositional bias: basic and acidic residues; that stretch reads MTISKERKEEVIS. A disordered region spans residues 1–24; sequence MTISKERKEEVISEHGAAAGDTGS.

It belongs to the universal ribosomal protein uS15 family. In terms of assembly, part of the 30S ribosomal subunit. Forms a bridge to the 50S subunit in the 70S ribosome, contacting the 23S rRNA.

In terms of biological role, one of the primary rRNA binding proteins, it binds directly to 16S rRNA where it helps nucleate assembly of the platform of the 30S subunit by binding and bridging several RNA helices of the 16S rRNA. Its function is as follows. Forms an intersubunit bridge (bridge B4) with the 23S rRNA of the 50S subunit in the ribosome. This is Small ribosomal subunit protein uS15 from Rhodopirellula baltica (strain DSM 10527 / NCIMB 13988 / SH1).